Reading from the N-terminus, the 729-residue chain is Disintegrin and metalloproteinase domain-containing protein 21 (729 aa).

The signal sequence occupies residues 1–39 (MECFIMLGADARTLMRVTLLLLWLKALPSLIDLSQTGST). A propeptide spanning residues 40–209 (QYLSSPEVVI…MKQNYGKLWP (170 aa)) is cleaved from the precursor. The N-linked (GlcNAc...) asparagine glycan is linked to Asn169. A Cysteine switch motif is present at residues 176 to 183 (MLCSLTEK). Cys178 is a binding site for Zn(2+). The Extracellular portion of the chain corresponds to 210-685 (HMWFLELAVV…DSGPTSQKRR (476 aa)). The region spanning 212–402 (WFLELAVVVD…NQGTCLYNHP (191 aa)) is the Peptidase M12B domain. N-linked (GlcNAc...) asparagine glycosylation occurs at Asn231. 3 cysteine pairs are disulfide-bonded: Cys320/Cys397, Cys360/Cys382, and Cys362/Cys367. Residue His345 participates in Zn(2+) binding. Glu346 is an active-site residue. Residues His349 and His355 each coordinate Zn(2+). 3 N-linked (GlcNAc...) asparagine glycosylation sites follow: Asn381, Asn441, and Asn482. A Disintegrin domain is found at 410 to 496 (VKRCGNGMVE…QCPEDGYVQD (87 aa)). Intrachain disulfides connect Cys468–Cys488, Cys638–Cys649, Cys643–Cys655, and Cys657–Cys666. The EGF-like domain maps to 638 to 667 (CLPETCNRKGVCNNKHHCHCDYGWSPPFCL). A helical transmembrane segment spans residues 686–706 (VIITVLSITVPVLSILICLLI). Over 707 to 729 (AGLYRIYCKIPSGPKETKASSPG) the chain is Cytoplasmic.

Requires Zn(2+) as cofactor. Has no obvious cleavage site for furin endopeptidase, suggesting that the proteolytic processing is regulated. In terms of tissue distribution, highly expressed in Leydig cells. Expressed also in cauda epididymidis, vas deferens, convoluted tubules, kidney and the parietal cells of stomach. Not detected on developing spermatocytes or mature sperm.

The protein resides in the membrane. Its function is as follows. May be involved in sperm maturation and/or fertilization. May also be involved in epithelia functions associated with establishing and maintaining gradients of ions or nutrients. This is Disintegrin and metalloproteinase domain-containing protein 21 (Adam21) from Mus musculus (Mouse).